We begin with the raw amino-acid sequence, 856 residues long: DNA mismatch repair protein MutS (856 aa).

Residue 618–625 (GPNMGGKS) coordinates ATP.

This sequence belongs to the DNA mismatch repair MutS family.

In terms of biological role, this protein is involved in the repair of mismatches in DNA. It is possible that it carries out the mismatch recognition step. This protein has a weak ATPase activity. The protein is DNA mismatch repair protein MutS of Shewanella baltica (strain OS155 / ATCC BAA-1091).